A 157-amino-acid polypeptide reads, in one-letter code: ATP synthase subunit b (157 aa).

The helical transmembrane segment at 11-31 (LIMFAMFTWFCMKFIWPPIVM) threads the bilayer.

This sequence belongs to the ATPase B chain family. As to quaternary structure, F-type ATPases have 2 components, F(1) - the catalytic core - and F(0) - the membrane proton channel. F(1) has five subunits: alpha(3), beta(3), gamma(1), delta(1), epsilon(1). F(0) has three main subunits: a(1), b(2) and c(10-14). The alpha and beta chains form an alternating ring which encloses part of the gamma chain. F(1) is attached to F(0) by a central stalk formed by the gamma and epsilon chains, while a peripheral stalk is formed by the delta and b chains.

The protein localises to the cell inner membrane. In terms of biological role, f(1)F(0) ATP synthase produces ATP from ADP in the presence of a proton or sodium gradient. F-type ATPases consist of two structural domains, F(1) containing the extramembraneous catalytic core and F(0) containing the membrane proton channel, linked together by a central stalk and a peripheral stalk. During catalysis, ATP synthesis in the catalytic domain of F(1) is coupled via a rotary mechanism of the central stalk subunits to proton translocation. Component of the F(0) channel, it forms part of the peripheral stalk, linking F(1) to F(0). In Vesicomyosocius okutanii subsp. Calyptogena okutanii (strain HA), this protein is ATP synthase subunit b.